Reading from the N-terminus, the 159-residue chain is MAAKVDIFAANLPNLTDEEMDMCRKAFAMFDKDGSGTIDTKELRTALSALGQNPTEEDMFVMISQVDQDGSRCIEFKEFVRVIQINKQMSAKDADEADTLDAFVALGGNLDKTGRILVDKLRSICEEFELTVNVDRLVKDADRDLNGFLSYDEFRALLS.

3 EF-hand domains span residues 18–53 (EEMD…LGQN), 54–89 (PTEE…NKQM), and 129–159 (ELTV…ALLS). 10 residues coordinate Ca(2+): Asp31, Asp33, Ser35, Thr37, Glu42, Asp67, Asp69, Ser71, Cys73, and Glu78.

In terms of assembly, consists of at least 3 heavy chains (alpha, beta and gamma), 2 intermediate chains and 8 light chains.

The protein resides in the cell projection. It is found in the cilium. The protein localises to the flagellum. In terms of biological role, may be involved in the calcium-mediated regulation of dynein motor function. Binds 1 mole of calcium. This is Dynein 18 kDa light chain, flagellar outer arm from Chlamydomonas reinhardtii (Chlamydomonas smithii).